The following is an 876-amino-acid chain: Valine--tRNA ligase (876 aa).

The 'HIGH' region signature appears at 43 to 53 (PNVTGVLHMGH). A 'KMSKS' region motif is present at residues 534–538 (KMSKS). Residue lysine 537 participates in ATP binding. Residues 847-876 (PEKVVAIEKAKKADAEAKIEALKASLKSLS) are a coiled coil.

Belongs to the class-I aminoacyl-tRNA synthetase family. ValS type 1 subfamily. As to quaternary structure, monomer.

It localises to the cytoplasm. It carries out the reaction tRNA(Val) + L-valine + ATP = L-valyl-tRNA(Val) + AMP + diphosphate. Functionally, catalyzes the attachment of valine to tRNA(Val). As ValRS can inadvertently accommodate and process structurally similar amino acids such as threonine, to avoid such errors, it has a 'posttransfer' editing activity that hydrolyzes mischarged Thr-tRNA(Val) in a tRNA-dependent manner. The chain is Valine--tRNA ligase from Christiangramia forsetii (strain DSM 17595 / CGMCC 1.15422 / KT0803) (Gramella forsetii).